A 714-amino-acid polypeptide reads, in one-letter code: Fatty acid oxidation complex subunit alpha (714 aa).

The tract at residues 1-190 (MEMTSAFTLN…KLGLVDDVVP (190 aa)) is enoyl-CoA hydratase. The segment at 306–714 (APLNSVGILG…FWKTTATDLQ (409 aa)) is 3-hydroxyacyl-CoA dehydrogenase.

The protein in the N-terminal section; belongs to the enoyl-CoA hydratase/isomerase family. In the central section; belongs to the 3-hydroxyacyl-CoA dehydrogenase family. Heterotetramer of two alpha chains (FadJ) and two beta chains (FadI).

Its subcellular location is the cytoplasm. The catalysed reaction is a (3S)-3-hydroxyacyl-CoA = a (2E)-enoyl-CoA + H2O. The enzyme catalyses a 4-saturated-(3S)-3-hydroxyacyl-CoA = a (3E)-enoyl-CoA + H2O. It carries out the reaction a (3S)-3-hydroxyacyl-CoA + NAD(+) = a 3-oxoacyl-CoA + NADH + H(+). It catalyses the reaction (3S)-3-hydroxybutanoyl-CoA = (3R)-3-hydroxybutanoyl-CoA. It participates in lipid metabolism; fatty acid beta-oxidation. In terms of biological role, catalyzes the formation of a hydroxyacyl-CoA by addition of water on enoyl-CoA. Also exhibits 3-hydroxyacyl-CoA epimerase and 3-hydroxyacyl-CoA dehydrogenase activities. In Escherichia coli (strain 55989 / EAEC), this protein is Fatty acid oxidation complex subunit alpha.